The following is a 409-amino-acid chain: NADH-quinone oxidoreductase subunit D (409 aa).

The protein belongs to the complex I 49 kDa subunit family. As to quaternary structure, NDH-1 is composed of 14 different subunits. Subunits NuoB, C, D, E, F, and G constitute the peripheral sector of the complex.

Its subcellular location is the cell inner membrane. The enzyme catalyses a quinone + NADH + 5 H(+)(in) = a quinol + NAD(+) + 4 H(+)(out). Functionally, NDH-1 shuttles electrons from NADH, via FMN and iron-sulfur (Fe-S) centers, to quinones in the respiratory chain. The immediate electron acceptor for the enzyme in this species is believed to be ubiquinone. Couples the redox reaction to proton translocation (for every two electrons transferred, four hydrogen ions are translocated across the cytoplasmic membrane), and thus conserves the redox energy in a proton gradient. This chain is NADH-quinone oxidoreductase subunit D, found in Helicobacter pylori (strain Shi470).